We begin with the raw amino-acid sequence, 82 residues long: Large ribosomal subunit protein bL31B (82 aa).

Belongs to the bacterial ribosomal protein bL31 family. Type B subfamily. As to quaternary structure, part of the 50S ribosomal subunit.

The protein is Large ribosomal subunit protein bL31B of Amoebophilus asiaticus (strain 5a2).